The sequence spans 202 residues: Translation initiation factor IF-3 (202 aa).

The segment at 178–202 (TPRKTPLLKKESETTEPKKALRSIN) is disordered. The span at 185 to 196 (LKKESETTEPKK) shows a compositional bias: basic and acidic residues.

Belongs to the IF-3 family. Monomer.

Its subcellular location is the cytoplasm. IF-3 binds to the 30S ribosomal subunit and shifts the equilibrium between 70S ribosomes and their 50S and 30S subunits in favor of the free subunits, thus enhancing the availability of 30S subunits on which protein synthesis initiation begins. This Prochlorococcus marinus (strain NATL1A) protein is Translation initiation factor IF-3.